The sequence spans 179 residues: uncharacterized protein (179 aa).

Residues 26–39 show a composition bias toward low complexity; that stretch reads AAKLAAATTPTHTA. The segment at 26–179 is disordered; that stretch reads AAKLAAATTP…RPRRNTLRHM (154 aa). Residues 150–165 show a composition bias toward polar residues; it reads RQSVTQSTAARQTQPH. The span at 167-179 shows a compositional bias: basic residues; the sequence is GRPRPRRNTLRHM.

This is an uncharacterized protein from Equus caballus (Horse).